Reading from the N-terminus, the 241-residue chain is Phosphoglycolate phosphatase (241 aa).

Asp8 (nucleophile) is an active-site residue. Mg(2+) is bound by residues Asp8, Asp10, and Asp174.

This sequence belongs to the HAD-like hydrolase superfamily. CbbY/CbbZ/Gph/YieH family. It depends on Mg(2+) as a cofactor.

The catalysed reaction is 2-phosphoglycolate + H2O = glycolate + phosphate. The protein operates within organic acid metabolism; glycolate biosynthesis; glycolate from 2-phosphoglycolate: step 1/1. In terms of biological role, specifically catalyzes the dephosphorylation of 2-phosphoglycolate. Is involved in the dissimilation of the intracellular 2-phosphoglycolate formed during the DNA repair of 3'-phosphoglycolate ends, a major class of DNA lesions induced by oxidative stress. The sequence is that of Phosphoglycolate phosphatase from Rhodospirillum rubrum (strain ATCC 11170 / ATH 1.1.1 / DSM 467 / LMG 4362 / NCIMB 8255 / S1).